The sequence spans 443 residues: Ribosomal protein uS12 methylthiotransferase RimO (443 aa).

Residues 1–116 (MKFHLISLGC…IAEYVGKLIA (116 aa)) form the MTTase N-terminal domain. [4Fe-4S] cluster is bound by residues Cys-10, Cys-45, Cys-79, Cys-154, Cys-158, and Cys-161. One can recognise a Radical SAM core domain in the interval 140–370 (STPFFRAWVK…LELQQELSTE (231 aa)). One can recognise a TRAM domain in the interval 373 to 441 (KKYVGTVQKV…QYDLVGGVVS (69 aa)).

This sequence belongs to the methylthiotransferase family. RimO subfamily. [4Fe-4S] cluster serves as cofactor.

Its subcellular location is the cytoplasm. The catalysed reaction is L-aspartate(89)-[ribosomal protein uS12]-hydrogen + (sulfur carrier)-SH + AH2 + 2 S-adenosyl-L-methionine = 3-methylsulfanyl-L-aspartate(89)-[ribosomal protein uS12]-hydrogen + (sulfur carrier)-H + 5'-deoxyadenosine + L-methionine + A + S-adenosyl-L-homocysteine + 2 H(+). In terms of biological role, catalyzes the methylthiolation of an aspartic acid residue of ribosomal protein uS12. In Desulfotalea psychrophila (strain LSv54 / DSM 12343), this protein is Ribosomal protein uS12 methylthiotransferase RimO.